We begin with the raw amino-acid sequence, 523 residues long: Melanoma-associated antigen E2 (523 aa).

MAGE domains are found at residues 88-288 (LEDR…YNKA) and 311-502 (MNDK…YREA).

This chain is Melanoma-associated antigen E2 (MAGEE2), found in Homo sapiens (Human).